Reading from the N-terminus, the 332-residue chain is Galactinol synthase 7 (332 aa).

The active site involves Lys101. Positions 117, 119, and 255 each coordinate Mn(2+).

The protein belongs to the glycosyltransferase 8 family. Galactosyltransferase subfamily. It depends on a divalent metal cation as a cofactor.

It localises to the cytoplasm. It carries out the reaction myo-inositol + UDP-alpha-D-galactose = alpha-D-galactosyl-(1-&gt;3)-1D-myo-inositol + UDP + H(+). Its function is as follows. Galactinol synthase involved in the biosynthesis of raffinose family oligosaccharides (RFOs) that function as osmoprotectants. May promote plant stress tolerance. This chain is Galactinol synthase 7 (GOLS7), found in Arabidopsis thaliana (Mouse-ear cress).